The primary structure comprises 310 residues: Malate dehydrogenase (310 aa).

Residues 7 to 13 (GAAGGIG) and aspartate 34 each bind NAD(+). Positions 81 and 87 each coordinate substrate. Residues asparagine 94 and 117–119 (ITN) contribute to the NAD(+) site. Residues asparagine 119 and arginine 153 each contribute to the substrate site. Catalysis depends on histidine 177, which acts as the Proton acceptor. Methionine 227 is a binding site for NAD(+).

Belongs to the LDH/MDH superfamily. MDH type 1 family. In terms of assembly, homodimer.

The catalysed reaction is (S)-malate + NAD(+) = oxaloacetate + NADH + H(+). In terms of biological role, catalyzes the reversible oxidation of malate to oxaloacetate. In Vibrio vulnificus (strain CMCP6), this protein is Malate dehydrogenase.